We begin with the raw amino-acid sequence, 166 residues long: Endoribonuclease YbeY (166 aa).

The Zn(2+) site is built by His126, His130, and His136.

Belongs to the endoribonuclease YbeY family. It depends on Zn(2+) as a cofactor.

The protein resides in the cytoplasm. Single strand-specific metallo-endoribonuclease involved in late-stage 70S ribosome quality control and in maturation of the 3' terminus of the 16S rRNA. This chain is Endoribonuclease YbeY, found in Laribacter hongkongensis (strain HLHK9).